The following is a 110-amino-acid chain: MFTNTLAAGLSSGIDFRIVAPSFVTMQVLLDALCNNLSIPFGPNVLFTKSPTAMAPTNADKRAFSALSSVTWSPNICTLILNLLSFVRLTLLAYLMATFHPLFYCSALVF.

This is an uncharacterized protein from Saccharomyces cerevisiae (strain ATCC 204508 / S288c) (Baker's yeast).